A 610-amino-acid polypeptide reads, in one-letter code: DNA mismatch repair protein MutL (610 aa).

Belongs to the DNA mismatch repair MutL/HexB family.

Functionally, this protein is involved in the repair of mismatches in DNA. It is required for dam-dependent methyl-directed DNA mismatch repair. May act as a 'molecular matchmaker', a protein that promotes the formation of a stable complex between two or more DNA-binding proteins in an ATP-dependent manner without itself being part of a final effector complex. The sequence is that of DNA mismatch repair protein MutL from Rickettsia conorii (strain ATCC VR-613 / Malish 7).